Here is a 509-residue protein sequence, read N- to C-terminus: Cytochrome P450 4A10 (509 aa).

A run of 2 helical transmembrane segments spans residues 11-31 (FTGS…LLLL) and 121-141 (LLAP…WFQH). Glutamate 320 serves as a coordination point for heme. At serine 439 the chain carries Phosphoserine. A heme-binding site is contributed by cysteine 456.

This sequence belongs to the cytochrome P450 family. The cofactor is heme. As to expression, expressed in liver (at protein level) and kidney (at protein level).

Its subcellular location is the endoplasmic reticulum membrane. It localises to the microsome membrane. The catalysed reaction is an omega-methyl-long-chain fatty acid + reduced [NADPH--hemoprotein reductase] + O2 = an omega-hydroxy-long-chain fatty acid + oxidized [NADPH--hemoprotein reductase] + H2O + H(+). It carries out the reaction dodecanoate + reduced [NADPH--hemoprotein reductase] + O2 = 12-hydroxydodecanoate + oxidized [NADPH--hemoprotein reductase] + H2O + H(+). The enzyme catalyses dodecanoate + reduced [NADPH--hemoprotein reductase] + O2 = 11-hydroxydodecanoate + oxidized [NADPH--hemoprotein reductase] + H2O + H(+). It catalyses the reaction tetradecanoate + reduced [NADPH--hemoprotein reductase] + O2 = 14-hydroxytetradecanoate + oxidized [NADPH--hemoprotein reductase] + H2O + H(+). The catalysed reaction is hexadecanoate + reduced [NADPH--hemoprotein reductase] + O2 = 16-hydroxyhexadecanoate + oxidized [NADPH--hemoprotein reductase] + H2O + H(+). It carries out the reaction (9Z)-octadecenoate + reduced [NADPH--hemoprotein reductase] + O2 = 18-hydroxy-(9Z)-octadecenoate + oxidized [NADPH--hemoprotein reductase] + H2O + H(+). The enzyme catalyses (9Z,12Z)-octadecadienoate + reduced [NADPH--hemoprotein reductase] + O2 = 18-hydroxy-(9Z,12Z)-octadecadienoate + oxidized [NADPH--hemoprotein reductase] + H2O + H(+). It catalyses the reaction (9Z,12Z)-octadecadienoate + reduced [NADPH--hemoprotein reductase] + O2 = 17-hydroxy-(9Z,12Z)-octadecadienoate + oxidized [NADPH--hemoprotein reductase] + H2O + H(+). The catalysed reaction is (5Z,8Z,11Z,14Z)-eicosatetraenoate + reduced [NADPH--hemoprotein reductase] + O2 = 20-hydroxy-(5Z,8Z,11Z,14Z)-eicosatetraenoate + oxidized [NADPH--hemoprotein reductase] + H2O + H(+). It carries out the reaction 8,9-epoxy-(5Z,11Z,14Z)-eicosatrienoate + reduced [NADPH--hemoprotein reductase] + O2 = 20-hydroxy-8,9-epoxy-(5Z,11Z,14Z)-eicosatrienoate + oxidized [NADPH--hemoprotein reductase] + H2O + H(+). A cytochrome P450 monooxygenase involved in the metabolism of fatty acids. Catalyzes predominantly the oxidation of the terminal carbon (omega-oxidation) of long-chain fatty acids. Acts as a major omega-hydroxylase for dodecanoic (lauric) acid in liver. In kidney, may play an important role in omega-hydroxylation of (5Z,8Z,11Z,14Z)-eicosatetraenoic acid (arachidonate) to 20-hydroxyeicosatetraenoic acid (20-HETE), a signaling molecule acting both as vasoconstrictive and natriuretic with overall effect on arterial blood pressure. Also participates in the formation of anti-inflammatory hydroxyepoxyeicosatrienoic acids (HEETs) in kidney by converting 8,9-epoxyeicosatrienoic acid (EET) to 20,8,9-HEET, an activator of PPARA. Displays substantially lower fatty acid omega-1 hydroxylase activity. Mechanistically, uses molecular oxygen inserting one oxygen atom into a substrate, and reducing the second into a water molecule, with two electrons provided by NADPH via cytochrome P450 reductase (CPR; NADPH-ferrihemoprotein reductase). The polypeptide is Cytochrome P450 4A10 (Cyp4a10) (Rattus norvegicus (Rat)).